A 345-amino-acid chain; its full sequence is Photosystem II protein D1 (345 aa).

3 consecutive transmembrane segments (helical) span residues 30-47, 119-134, and 143-157; these read YVGW…TAAT, HFFI…EWEL, and WIAV…AASA. Position 119 (His119) interacts with chlorophyll a. Tyr127 contributes to the pheophytin a binding site. [CaMn4O5] cluster contacts are provided by Asp171 and Glu190. The helical transmembrane segment at 198 to 219 threads the bilayer; sequence FHMLGVAGVFGGSLFSAMHGSL. Position 199 (His199) interacts with chlorophyll a. Residues His216 and 265–266 each bind a quinone; that span reads SF. Residue His216 coordinates Fe cation. Residue His273 coordinates Fe cation. The helical transmembrane segment at 275-289 threads the bilayer; sequence FLAVWPVVGIWFTAL. The [CaMn4O5] cluster site is built by His333, Glu334, Asp343, and Ala345.

This sequence belongs to the reaction center PufL/M/PsbA/D family. PSII is composed of 1 copy each of membrane proteins PsbA, PsbB, PsbC, PsbD, PsbE, PsbF, PsbH, PsbI, PsbJ, PsbK, PsbL, PsbM, PsbT, PsbY, PsbZ, Psb30/Ycf12, at least 3 peripheral proteins of the oxygen-evolving complex and a large number of cofactors. It forms dimeric complexes. The D1/D2 heterodimer binds P680, chlorophylls that are the primary electron donor of PSII, and subsequent electron acceptors. It shares a non-heme iron and each subunit binds pheophytin, quinone, additional chlorophylls, carotenoids and lipids. D1 provides most of the ligands for the Mn4-Ca-O5 cluster of the oxygen-evolving complex (OEC). There is also a Cl(-1) ion associated with D1 and D2, which is required for oxygen evolution. The PSII complex binds additional chlorophylls, carotenoids and specific lipids. is required as a cofactor. Post-translationally, tyr-162 forms a radical intermediate that is referred to as redox-active TyrZ, YZ or Y-Z.

It is found in the plastid. Its subcellular location is the chloroplast thylakoid membrane. The catalysed reaction is 2 a plastoquinone + 4 hnu + 2 H2O = 2 a plastoquinol + O2. Its function is as follows. Photosystem II (PSII) is a light-driven water:plastoquinone oxidoreductase that uses light energy to abstract electrons from H(2)O, generating O(2) and a proton gradient subsequently used for ATP formation. It consists of a core antenna complex that captures photons, and an electron transfer chain that converts photonic excitation into a charge separation. The D1/D2 (PsbA/PsbD) reaction center heterodimer binds P680, the primary electron donor of PSII as well as several subsequent electron acceptors. The protein is Photosystem II protein D1 of Euglena gracilis.